Here is a 295-residue protein sequence, read N- to C-terminus: Pyridoxal 5'-phosphate synthase subunit PdxS (295 aa).

Asp-25 is a binding site for D-ribose 5-phosphate. Catalysis depends on Lys-82, which acts as the Schiff-base intermediate with D-ribose 5-phosphate. Gly-154 contacts D-ribose 5-phosphate. Arg-166 contacts D-glyceraldehyde 3-phosphate. D-ribose 5-phosphate-binding positions include Gly-215 and 236 to 237 (GS).

Belongs to the PdxS/SNZ family. In terms of assembly, in the presence of PdxT, forms a dodecamer of heterodimers.

The enzyme catalyses aldehydo-D-ribose 5-phosphate + D-glyceraldehyde 3-phosphate + L-glutamine = pyridoxal 5'-phosphate + L-glutamate + phosphate + 3 H2O + H(+). The protein operates within cofactor biosynthesis; pyridoxal 5'-phosphate biosynthesis. Functionally, catalyzes the formation of pyridoxal 5'-phosphate from ribose 5-phosphate (RBP), glyceraldehyde 3-phosphate (G3P) and ammonia. The ammonia is provided by the PdxT subunit. Can also use ribulose 5-phosphate and dihydroxyacetone phosphate as substrates, resulting from enzyme-catalyzed isomerization of RBP and G3P, respectively. This is Pyridoxal 5'-phosphate synthase subunit PdxS from Staphylococcus aureus (strain Mu3 / ATCC 700698).